An 84-amino-acid polypeptide reads, in one-letter code: Small ribosomal subunit protein uS17 (84 aa).

It belongs to the universal ribosomal protein uS17 family. Part of the 30S ribosomal subunit.

In terms of biological role, one of the primary rRNA binding proteins, it binds specifically to the 5'-end of 16S ribosomal RNA. The chain is Small ribosomal subunit protein uS17 from Yersinia enterocolitica serotype O:8 / biotype 1B (strain NCTC 13174 / 8081).